We begin with the raw amino-acid sequence, 211 residues long: Arginine exporter protein ArgO (211 aa).

The next 6 helical transmembrane spans lie at 1 to 21, 37 to 57, 68 to 88, 111 to 131, 147 to 167, and 179 to 199; these read MISY…PLGP, LMIA…GIFG, LLAL…FGAL, IIAT…DTFV, WFAL…ALLA, and AQRI…FQLA.

The protein belongs to the LysE/ArgO transporter (TC 2.A.75) family.

It localises to the cell inner membrane. It catalyses the reaction L-arginine(in) = L-arginine(out). In terms of biological role, involved in the export of arginine. Important to control the intracellular level of arginine and the correct balance between arginine and lysine. This is Arginine exporter protein ArgO from Salmonella paratyphi B (strain ATCC BAA-1250 / SPB7).